Here is an 89-residue protein sequence, read N- to C-terminus: Small ribosomal subunit protein uS15 (89 aa).

The protein belongs to the universal ribosomal protein uS15 family. Part of the 30S ribosomal subunit. Forms a bridge to the 50S subunit in the 70S ribosome, contacting the 23S rRNA.

Functionally, one of the primary rRNA binding proteins, it binds directly to 16S rRNA where it helps nucleate assembly of the platform of the 30S subunit by binding and bridging several RNA helices of the 16S rRNA. Forms an intersubunit bridge (bridge B4) with the 23S rRNA of the 50S subunit in the ribosome. In Pseudomonas aeruginosa (strain LESB58), this protein is Small ribosomal subunit protein uS15.